We begin with the raw amino-acid sequence, 182 residues long: Large ribosomal subunit protein uL5 (182 aa).

This sequence belongs to the universal ribosomal protein uL5 family. In terms of assembly, part of the 50S ribosomal subunit; part of the 5S rRNA/L5/L18/L25 subcomplex. Contacts the 5S rRNA and the P site tRNA. Forms a bridge to the 30S subunit in the 70S ribosome.

Functionally, this is one of the proteins that bind and probably mediate the attachment of the 5S RNA into the large ribosomal subunit, where it forms part of the central protuberance. In the 70S ribosome it contacts protein S13 of the 30S subunit (bridge B1b), connecting the 2 subunits; this bridge is implicated in subunit movement. Contacts the P site tRNA; the 5S rRNA and some of its associated proteins might help stabilize positioning of ribosome-bound tRNAs. The chain is Large ribosomal subunit protein uL5 from Borreliella burgdorferi (strain ATCC 35210 / DSM 4680 / CIP 102532 / B31) (Borrelia burgdorferi).